Here is a 342-residue protein sequence, read N- to C-terminus: Isopentenyl-diphosphate delta-isomerase (342 aa).

Position 11-12 (11-12 (RK)) interacts with substrate. Residues serine 68, 69–71 (SMT), serine 99, and asparagine 128 each bind FMN. 99-101 (SQR) lines the substrate pocket. Residue glutamine 162 participates in substrate binding. Mg(2+) is bound at residue glutamate 163. FMN-binding positions include lysine 194, serine 219, threonine 224, 275 to 277 (GVR), and 296 to 297 (AK).

It belongs to the IPP isomerase type 2 family. In terms of assembly, homooctamer. Dimer of tetramers. FMN serves as cofactor. It depends on NADPH as a cofactor. Requires Mg(2+) as cofactor.

It localises to the cytoplasm. The enzyme catalyses isopentenyl diphosphate = dimethylallyl diphosphate. Functionally, involved in the biosynthesis of isoprenoids. Catalyzes the 1,3-allylic rearrangement of the homoallylic substrate isopentenyl (IPP) to its allylic isomer, dimethylallyl diphosphate (DMAPP). The polypeptide is Isopentenyl-diphosphate delta-isomerase (Legionella pneumophila (strain Lens)).